Reading from the N-terminus, the 281-residue chain is Probable endonuclease 4 (281 aa).

Zn(2+) is bound by residues His69, His109, Glu145, Asp179, His182, His216, Asp229, His231, and Glu261.

This sequence belongs to the AP endonuclease 2 family. The cofactor is Zn(2+).

It carries out the reaction Endonucleolytic cleavage to 5'-phosphooligonucleotide end-products.. Its function is as follows. Endonuclease IV plays a role in DNA repair. It cleaves phosphodiester bonds at apurinic or apyrimidinic (AP) sites, generating a 3'-hydroxyl group and a 5'-terminal sugar phosphate. This Parabacteroides distasonis (strain ATCC 8503 / DSM 20701 / CIP 104284 / JCM 5825 / NCTC 11152) protein is Probable endonuclease 4.